The chain runs to 200 residues: ATP-dependent Clp protease proteolytic subunit 2 (200 aa).

The active-site Nucleophile is the Ser96. The active site involves His121.

The protein belongs to the peptidase S14 family. As to quaternary structure, fourteen ClpP subunits assemble into 2 heptameric rings which stack back to back to give a disk-like structure with a central cavity, resembling the structure of eukaryotic proteasomes.

Its subcellular location is the cytoplasm. It catalyses the reaction Hydrolysis of proteins to small peptides in the presence of ATP and magnesium. alpha-casein is the usual test substrate. In the absence of ATP, only oligopeptides shorter than five residues are hydrolyzed (such as succinyl-Leu-Tyr-|-NHMec, and Leu-Tyr-Leu-|-Tyr-Trp, in which cleavage of the -Tyr-|-Leu- and -Tyr-|-Trp bonds also occurs).. Functionally, cleaves peptides in various proteins in a process that requires ATP hydrolysis. Has a chymotrypsin-like activity. Plays a major role in the degradation of misfolded proteins. The protein is ATP-dependent Clp protease proteolytic subunit 2 of Synechococcus sp. (strain JA-2-3B'a(2-13)) (Cyanobacteria bacterium Yellowstone B-Prime).